We begin with the raw amino-acid sequence, 450 residues long: Protein W (450 aa).

The segment at 53–92 is disordered; the sequence is SGESEQVEGGMSKDDGDVERRNLEDLSSTSPTDGTIGKRV. A compositionally biased stretch (basic and acidic residues) spans 63-76; that stretch reads MSKDDGDVERRNLE. A Phosphoserine; by host modification is found at Ser-257. The tract at residues 265-324 is disordered; that stretch reads ISPEDEEPSSVGGKPNESIGRTIEGQSIRDNLQAKDNKSTDVPGAGPKDSAVKEEPPQKR. Ser-350 bears the Phosphoserine; by host mark. 2 disordered regions span residues 384–403 and 429–450; these read VQTADRQRPGTPMPKSRGIP and PGMFEDHPPTKKARVSMRRMSN. Over residues 438–450 the composition is skewed to basic residues; sequence TKKARVSMRRMSN. Residues 439–442 carry the Nuclear localization signal motif; it reads KKAR.

As to quaternary structure, interacts with host STAT1.

It localises to the host nucleus. Prevent the establishment of cellular antiviral state by blocking the interferon-alpha/beta (IFN-alpha/beta). Interacts with host STAT1 protein in the nucleus, blocking it's phosphorylation by IFN-alpha/beta. Also blocks antiviral state induced by Toll-like receptor 3/TLR3 binding to dsRNA. The chain is Protein W (P/V/C) from Cynopterus brachyotis (Lesser short-nosed fruit bat).